The chain runs to 213 residues: Adenylate kinase (213 aa).

An ATP-binding site is contributed by 10-15 (GSGKGT). An NMP region spans residues 30-59 (STGDLFRTNIENDTPLGKEIKQIVENGQLV). Residues Thr-31, Arg-36, 57-59 (QLV), 85-88 (GFPR), and Gln-92 contribute to the AMP site. An LID region spans residues 121 to 158 (GRRICQSCCKIFNIYTLPTKEKEICDFCQGILYQRKDD). An ATP-binding site is contributed by Arg-122. Positions 125 and 128 each coordinate Zn(2+). 131 to 132 (IF) contributes to the ATP binding site. Zn(2+) contacts are provided by Cys-145 and Cys-148. AMP-binding residues include Arg-155 and Arg-166. Lys-194 is a binding site for ATP.

It belongs to the adenylate kinase family. In terms of assembly, monomer.

Its subcellular location is the cytoplasm. It catalyses the reaction AMP + ATP = 2 ADP. It functions in the pathway purine metabolism; AMP biosynthesis via salvage pathway; AMP from ADP: step 1/1. Catalyzes the reversible transfer of the terminal phosphate group between ATP and AMP. Plays an important role in cellular energy homeostasis and in adenine nucleotide metabolism. The chain is Adenylate kinase from Borrelia duttonii (strain Ly).